The following is a 302-amino-acid chain: Sulfate adenylyltransferase subunit 2 (302 aa).

The disordered stretch occupies residues 280-302 (RQGRLIDSDQSASMEQKKRQGYF).

This sequence belongs to the PAPS reductase family. CysD subfamily. In terms of assembly, heterodimer composed of CysD, the smaller subunit, and CysN.

It carries out the reaction sulfate + ATP + H(+) = adenosine 5'-phosphosulfate + diphosphate. It functions in the pathway sulfur metabolism; hydrogen sulfide biosynthesis; sulfite from sulfate: step 1/3. Functionally, with CysN forms the ATP sulfurylase (ATPS) that catalyzes the adenylation of sulfate producing adenosine 5'-phosphosulfate (APS) and diphosphate, the first enzymatic step in sulfur assimilation pathway. APS synthesis involves the formation of a high-energy phosphoric-sulfuric acid anhydride bond driven by GTP hydrolysis by CysN coupled to ATP hydrolysis by CysD. This is Sulfate adenylyltransferase subunit 2 from Shewanella frigidimarina (strain NCIMB 400).